The primary structure comprises 226 residues: 7-cyano-7-deazaguanine synthase (226 aa).

10–20 serves as a coordination point for ATP; that stretch reads LSGGLDSATAA. Residues C191, C199, C202, and C205 each coordinate Zn(2+).

This sequence belongs to the QueC family. The cofactor is Zn(2+).

The catalysed reaction is 7-carboxy-7-deazaguanine + NH4(+) + ATP = 7-cyano-7-deazaguanine + ADP + phosphate + H2O + H(+). It participates in purine metabolism; 7-cyano-7-deazaguanine biosynthesis. Functionally, catalyzes the ATP-dependent conversion of 7-carboxy-7-deazaguanine (CDG) to 7-cyano-7-deazaguanine (preQ(0)). The chain is 7-cyano-7-deazaguanine synthase from Prochlorococcus marinus (strain MIT 9303).